A 152-amino-acid polypeptide reads, in one-letter code: UPF0266 membrane protein ESA_01432 (152 aa).

Transmembrane regions (helical) follow at residues 1-21, 45-65, and 67-87; these read MTLTDGVLVIFIIALLGWAIY, ADSLIFTGLVAILIWQNVASH, and ALLTTWLLGALGLLAIYLFWI.

This sequence belongs to the UPF0266 family.

It is found in the cell inner membrane. In Cronobacter sakazakii (strain ATCC BAA-894) (Enterobacter sakazakii), this protein is UPF0266 membrane protein ESA_01432.